Reading from the N-terminus, the 160-residue chain is Nucleotide-binding protein CPS_1098 (160 aa).

The protein belongs to the YajQ family.

In terms of biological role, nucleotide-binding protein. The polypeptide is Nucleotide-binding protein CPS_1098 (Colwellia psychrerythraea (strain 34H / ATCC BAA-681) (Vibrio psychroerythus)).